The following is a 142-amino-acid chain: Large ribosomal subunit protein uL13 (142 aa).

The protein belongs to the universal ribosomal protein uL13 family. In terms of assembly, part of the 50S ribosomal subunit.

This protein is one of the early assembly proteins of the 50S ribosomal subunit, although it is not seen to bind rRNA by itself. It is important during the early stages of 50S assembly. This chain is Large ribosomal subunit protein uL13, found in Xanthomonas oryzae pv. oryzae (strain MAFF 311018).